We begin with the raw amino-acid sequence, 278 residues long: MVRLPLKCLLWGCFLTAVHPEPPTSCKENQYPTNSRCCNLCPPGQKLVNHCTEVTETECLPCSSSEFLATWNREKHCHQHKYCDPNLGLQVQREGTSKTDTTCVCSEGHHCTNSACESCTLHSLCFPGLGVKQMATEVSDTICEPCPVGFFSNVSSASEKCQPWTSCESKGLVEQRAGTNKTDVVCGFQSRMRALVVIPITLGILFAVLLVFLCIRKVTKEQETKALHPKTERQDPVETIDLEDFPDSTAPVQETLHWCQPVTQEDGKESRISVQERE.

The signal sequence occupies residues 1–20 (MVRLPLKCLLWGCFLTAVHP). Topologically, residues 21-194 (EPPTSCKENQ…VCGFQSRMRA (174 aa)) are extracellular. TNFR-Cys repeat units follow at residues 25–60 (SCKE…TECL), 61–103 (PCSS…DTTC), 104–144 (VCSE…TICE), and 145–187 (PCPV…VVCG). Intrachain disulfides connect Cys-26–Cys-37, Cys-38–Cys-51, Cys-41–Cys-59, Cys-62–Cys-77, Cys-83–Cys-103, Cys-105–Cys-119, Cys-111–Cys-116, and Cys-125–Cys-143. N-linked (GlcNAc...) asparagine glycans are attached at residues Asn-153 and Asn-180. Residues 195–215 (LVVIPITLGILFAVLLVFLCI) traverse the membrane as a helical segment. The Cytoplasmic segment spans residues 216–278 (RKVTKEQETK…ESRISVQERE (63 aa)).

In terms of assembly, monomer and homodimer. Interacts with TRAF1, TRAF2, TRAF3, TRAF5 and TRAF6. Interacts with TRAF6 and MAP3K8; the interaction is required for ERK activation.

The protein resides in the membrane. Functionally, receptor for TNFSF5/CD40LG. Transduces TRAF6- and MAP3K8-mediated signals that activate ERK in macrophages and B cells, leading to induction of immunoglobulin secretion. The sequence is that of Tumor necrosis factor receptor superfamily member 5 (CD40) from Sus scrofa (Pig).